The primary structure comprises 310 residues: Ribosomal RNA small subunit methyltransferase H (310 aa).

S-adenosyl-L-methionine is bound by residues 35–37, Asp-52, Phe-79, Asp-100, and Gln-107; that span reads GGH.

Belongs to the methyltransferase superfamily. RsmH family.

Its subcellular location is the cytoplasm. The enzyme catalyses cytidine(1402) in 16S rRNA + S-adenosyl-L-methionine = N(4)-methylcytidine(1402) in 16S rRNA + S-adenosyl-L-homocysteine + H(+). Functionally, specifically methylates the N4 position of cytidine in position 1402 (C1402) of 16S rRNA. The chain is Ribosomal RNA small subunit methyltransferase H from Anaeromyxobacter sp. (strain Fw109-5).